The chain runs to 411 residues: Receptor GIN3 (411 aa).

Residues 1–99 (MSGFVAGEEA…LLPILPHPRN (99 aa)) lie on the Extracellular side of the membrane. The chain crosses the membrane as a helical span at residues 100 to 120 (IPIIVPLFCVFTVMTSLAVGL). The Cytoplasmic portion of the chain corresponds to 121-134 (RLWSRQKVAGGIRS). The helical transmembrane segment at 135–155 (FDWLALAGFGLTIIYGAVSVY) threads the bilayer. Topologically, residues 156–181 (HSKVSGPYQAFYDRTWDQMKENYKVY) are extracellular. A helical transmembrane segment spans residues 182 to 202 (LVLTIMYPFIMGLIKISLLLF). At 203-227 (YYRVATLNYVQWAVYATGSLTIANS) the chain is on the cytoplasmic side. A helical membrane pass occupies residues 228-248 (IAAIITHCLAFMPIDFWNHFL). The Extracellular portion of the chain corresponds to 249–262 (QSPFKFNSRTPMLV). The helical transmembrane segment at 263–283 (FGAVYILTDVAILIIPMPMVF) threads the bilayer. At 284 to 292 (QLKLYPREK) the chain is on the cytoplasmic side. Residues 293–313 (VIAVIAFSLGGVACVASGFRI) traverse the membrane as a helical segment. Residues 314-328 (WAIDEFQNYSGKNSS) are Extracellular-facing. 2 N-linked (GlcNAc...) asparagine glycosylation sites follow: Asn-321 and Asn-326. Residues 329 to 349 (GLMIDAWTMIELNLTLICASA) form a helical membrane-spanning segment. Residues 350 to 411 (PAIRALAIHY…QSPVIPKEVV (62 aa)) are Cytoplasmic-facing. Residues 371 to 411 (FSSSGATRGSKSAGSSGKSKTPESEKSMQVSQSPVIPKEVV) are disordered. A compositionally biased stretch (low complexity) spans 372–389 (SSSGATRGSKSAGSSGKS).

Belongs to the SAT4 family. Interacts with guanine nucleotide-binding protein alpha GPA2; to activate adenylate cyclase and positively regulate nematode trap formation.

Its subcellular location is the cell membrane. Functionally, receptor that senses nematode-derived signals at the cell surface and signals via adenylate cyclase to positively regulate trap formation for nematode capture. This Arthrobotrys oligospora (strain ATCC 24927 / CBS 115.81 / DSM 1491) (Nematode-trapping fungus) protein is Receptor GIN3.